Reading from the N-terminus, the 556-residue chain is Formate--tetrahydrofolate ligase (556 aa).

ATP is bound at residue 65 to 72; sequence TPAGEGKS.

It belongs to the formate--tetrahydrofolate ligase family.

The catalysed reaction is (6S)-5,6,7,8-tetrahydrofolate + formate + ATP = (6R)-10-formyltetrahydrofolate + ADP + phosphate. It participates in one-carbon metabolism; tetrahydrofolate interconversion. This is Formate--tetrahydrofolate ligase from Streptococcus pneumoniae (strain Taiwan19F-14).